The primary structure comprises 716 residues: Pyruvate/proton symporter BtsT (716 aa).

Topologically, residues 1–5 (MDTKK) are cytoplasmic. The helical transmembrane segment at 6–26 (IFKHIPWVILGIIGAFCLAVV) threads the bilayer. Residues 27-30 (ALRR) lie on the Periplasmic side of the membrane. A helical transmembrane segment spans residues 31-51 (GEHISALWIVVASVSVYLVAY). Over 52 to 88 (RYYSLYIAQKVMKLDPTRATPAVINNDGLNYVPTNRY) the chain is Cytoplasmic. The helical transmembrane segment at 89–109 (VLFGHHFAAIAGAGPLVGPVL) threads the bilayer. Residues 110–119 (AAQMGYLPGT) lie on the Periplasmic side of the membrane. The helical transmembrane segment at 120-140 (LWLLAGVVLAGAVQDFMVLFI) threads the bilayer. Over 141 to 163 (SSRRNGASLGEMIKEEMGPVPGT) the chain is Cytoplasmic. Residues 164 to 184 (IALFGCFLIMIIILAVLALIV) form a helical membrane-spanning segment. At 185–191 (VKALAES) the chain is on the periplasmic side. The helical transmembrane segment at 192–212 (PWGVFTVCSTVPIALFMGIYM) threads the bilayer. Over 213–222 (RFIRPGRVGE) the chain is Cytoplasmic. The chain crosses the membrane as a helical span at residues 223–243 (VSVIGIVLLVASIYFGGVIAH). Topologically, residues 244-257 (DPYWGPALTFKDTT) are periplasmic. Residues 258-278 (ITFALIGYAFVSALLPVWLIL) traverse the membrane as a helical segment. The Cytoplasmic portion of the chain corresponds to 279–282 (APRD). A helical transmembrane segment spans residues 283 to 303 (YLATFLKIGVIVGLALGIVVL). The Periplasmic segment spans residues 304 to 326 (NPELKMPAMTQYIDGTGPLWKGA). Residues 327–347 (LFPFLFITIACGAVSGFHALI) traverse the membrane as a helical segment. Over 348–374 (SSGTTPKLLANETDARFIGYGAMLMES) the chain is Cytoplasmic. The chain crosses the membrane as a helical span at residues 375-395 (FVAIMALVAASIIEPGLYFAM). The Periplasmic portion of the chain corresponds to 396 to 484 (NTPPAGLGIT…HVFHKVLPMA (89 aa)). A helical membrane pass occupies residues 485–505 (DMGFWYHFGILFEALFILTAL). Topologically, residues 506–531 (DAGTRSGRFMLQDLLGNFIPFLKKTD) are cytoplasmic. A helical transmembrane segment spans residues 532–552 (SLVAGIIGTAGCVGLWGYLLY). At 553–568 (QGVVDPLGGVKSLWPL) the chain is on the periplasmic side. Residues 569–589 (FGISNQMLAAVALVLGTVVLI) form a helical membrane-spanning segment. At 590-596 (KMKRTQY) the chain is on the cytoplasmic side. The chain crosses the membrane as a helical span at residues 597–617 (IWVTVVPAVWLLICTTWALGL). At 618–668 (KLFSTNPQMEGFFYMASQYKEKIANGTDLTAQQIANMNHIVVNNYTNAGLS) the chain is on the periplasmic side. Residues 669 to 689 (ILFLIVVYSIIFYGFKTWLAV) form a helical membrane-spanning segment. At 690-716 (RNSDKRTDKETPYVPIPEGGVKISSHH) the chain is on the cytoplasmic side. Residues 696-716 (TDKETPYVPIPEGGVKISSHH) form a disordered region.

This sequence belongs to the peptide transporter carbon starvation (CstA) (TC 2.A.114) family. As to quaternary structure, interacts with BtsS and YpdA.

Its subcellular location is the cell inner membrane. The catalysed reaction is pyruvate(out) + H(+)(out) = pyruvate(in) + H(+)(in). With respect to regulation, transport is inhibited by the protonophores 2,4-dinitrophenol (DNP) and carbonyl cyanide m-chlorophenyl hydrazone (CCCP), but not by ionophores such as valinomycin, nonactin and nigericin. Transports pyruvate with a high affinity and specificity. The process is driven by the proton motive force. Under nutrient limiting conditions, mediates the uptake of pyruvate, thus enabling it to be used as a carbon source for the growth and survival. Part of a nutrient-sensing regulatory network composed of the two-component regulatory systems BtsS/BtsR and YpdA/YpdB, and their respective target proteins, BtsT and YhjX. In Escherichia coli (strain K12), this protein is Pyruvate/proton symporter BtsT.